A 330-amino-acid chain; its full sequence is D-alanine--D-alanine ligase (330 aa).

The ATP-grasp domain occupies 120–326 (KLWYDALGIP…FKTFLQKAVL (207 aa)). An ATP-binding site is contributed by 150–205 (AFKQWGGLFVKAACQGSSVGCYKVTSEAELSKAINDAFGYSQQVLVEKAVKPRELE). The Mg(2+) site is built by D280, E293, and N295.

It belongs to the D-alanine--D-alanine ligase family. Mg(2+) is required as a cofactor. The cofactor is Mn(2+).

The protein resides in the cytoplasm. The enzyme catalyses 2 D-alanine + ATP = D-alanyl-D-alanine + ADP + phosphate + H(+). Its pathway is cell wall biogenesis; peptidoglycan biosynthesis. In terms of biological role, cell wall formation. The chain is D-alanine--D-alanine ligase from Aliivibrio fischeri (strain ATCC 700601 / ES114) (Vibrio fischeri).